We begin with the raw amino-acid sequence, 306 residues long: UDP-3-O-acyl-N-acetylglucosamine deacetylase (306 aa).

Residues His-79, His-238, and Asp-242 each contribute to the Zn(2+) site. The active-site Proton donor is the His-265.

Belongs to the LpxC family. Zn(2+) is required as a cofactor.

It carries out the reaction a UDP-3-O-[(3R)-3-hydroxyacyl]-N-acetyl-alpha-D-glucosamine + H2O = a UDP-3-O-[(3R)-3-hydroxyacyl]-alpha-D-glucosamine + acetate. Its pathway is glycolipid biosynthesis; lipid IV(A) biosynthesis; lipid IV(A) from (3R)-3-hydroxytetradecanoyl-[acyl-carrier-protein] and UDP-N-acetyl-alpha-D-glucosamine: step 2/6. In terms of biological role, catalyzes the hydrolysis of UDP-3-O-myristoyl-N-acetylglucosamine to form UDP-3-O-myristoylglucosamine and acetate, the committed step in lipid A biosynthesis. In Shewanella denitrificans (strain OS217 / ATCC BAA-1090 / DSM 15013), this protein is UDP-3-O-acyl-N-acetylglucosamine deacetylase.